A 341-amino-acid chain; its full sequence is Zinc finger protein ZIC 4 (341 aa).

The interval His-36 to Leu-66 is disordered. A C2H2-type 1; atypical zinc finger spans residues Leu-135–His-169. The segment at His-178 to His-205 adopts a C2H2-type 2; atypical zinc-finger fold. C2H2-type zinc fingers lie at residues Phe-211–His-235, Phe-241–His-265, and Tyr-271–His-295. The segment at Arg-289–Ile-309 is disordered.

The protein belongs to the GLI C2H2-type zinc-finger protein family. Exclusively expressed in the cerebellum.

The protein resides in the nucleus. In terms of biological role, binds to DNA. This is Zinc finger protein ZIC 4 (Zic4) from Mus musculus (Mouse).